The sequence spans 252 residues: PHD finger protein ALFIN-LIKE 7 (252 aa).

The interval 141–193 (AKQSKDQSANHNSSRSKSSGGKPRHSESHTKASKMSPPPRKEDESGDEDEDDE) is disordered. A compositionally biased stretch (low complexity) spans 149 to 161 (ANHNSSRSKSSGG). S176 is subject to Phosphoserine. Acidic residues predominate over residues 184–193 (ESGDEDEDDE). The PHD-type zinc finger occupies 195–247 (GAVCGACGDNYGGDEFWICCDACEKWFHGKCVKITPAKAEHIKHYKCPSCTTS).

This sequence belongs to the Alfin family. As to quaternary structure, interacts with H3K4me3 and to a lesser extent with H3K4me2. In terms of tissue distribution, ubiquitously expressed.

It localises to the nucleus. In terms of biological role, histone-binding component that specifically recognizes H3 tails trimethylated on 'Lys-4' (H3K4me3), which mark transcription start sites of virtually all active genes. In Arabidopsis thaliana (Mouse-ear cress), this protein is PHD finger protein ALFIN-LIKE 7 (AL7).